Here is a 339-residue protein sequence, read N- to C-terminus: MRVYYDRDADLNLIKSKKVAIIGYGSQGRAHALNLKDSGAKDLAVALRPGSASAKKAEADGLKVMSVAEAAGWADLMMMATPDELQAGIYNNEIAPNIRDGAAIAFAHGLNVHFGLIEPKKTVDVLMIAPKGPGHTVRSEYQRGGGVPCLVAVHHDASGNALDLALSYACGVGGGRSGIIETTFREECETDLFGEQVVLCGGLVELIRAGFETLVEAGYAPEMAYFECLHEVKLIVDLIYEGGIANMNYSISNTAEWGEYVSGPRIITPETKAEMKRVLKDIQTGKFTAEWMQEWHSGAARFKATRRLNDSHQIEEVGEKLRAMMPWISKNKLVDKAKN.

The KARI N-terminal Rossmann domain maps to 1–182 (MRVYYDRDAD…GGGRSGIIET (182 aa)). NADP(+)-binding positions include 24–27 (YGSQ), Arg-48, Ser-51, Ser-53, and 83–86 (DELQ). Residue His-108 is part of the active site. Gly-134 lines the NADP(+) pocket. A KARI C-terminal knotted domain is found at 183–328 (TFREECETDL…EKLRAMMPWI (146 aa)). Positions 191, 195, 227, and 231 each coordinate Mg(2+). Residue Ser-252 participates in substrate binding.

The protein belongs to the ketol-acid reductoisomerase family. Mg(2+) is required as a cofactor.

It carries out the reaction (2R)-2,3-dihydroxy-3-methylbutanoate + NADP(+) = (2S)-2-acetolactate + NADPH + H(+). The catalysed reaction is (2R,3R)-2,3-dihydroxy-3-methylpentanoate + NADP(+) = (S)-2-ethyl-2-hydroxy-3-oxobutanoate + NADPH + H(+). It participates in amino-acid biosynthesis; L-isoleucine biosynthesis; L-isoleucine from 2-oxobutanoate: step 2/4. Its pathway is amino-acid biosynthesis; L-valine biosynthesis; L-valine from pyruvate: step 2/4. Involved in the biosynthesis of branched-chain amino acids (BCAA). Catalyzes an alkyl-migration followed by a ketol-acid reduction of (S)-2-acetolactate (S2AL) to yield (R)-2,3-dihydroxy-isovalerate. In the isomerase reaction, S2AL is rearranged via a Mg-dependent methyl migration to produce 3-hydroxy-3-methyl-2-ketobutyrate (HMKB). In the reductase reaction, this 2-ketoacid undergoes a metal-dependent reduction by NADPH to yield (R)-2,3-dihydroxy-isovalerate. In Chelativorans sp. (strain BNC1), this protein is Ketol-acid reductoisomerase (NADP(+)).